The primary structure comprises 394 residues: Exodeoxyribonuclease 7 large subunit (394 aa).

The protein belongs to the XseA family. As to quaternary structure, heterooligomer composed of large and small subunits.

The protein resides in the cytoplasm. It catalyses the reaction Exonucleolytic cleavage in either 5'- to 3'- or 3'- to 5'-direction to yield nucleoside 5'-phosphates.. Its function is as follows. Bidirectionally degrades single-stranded DNA into large acid-insoluble oligonucleotides, which are then degraded further into small acid-soluble oligonucleotides. This Thermotoga petrophila (strain ATCC BAA-488 / DSM 13995 / JCM 10881 / RKU-1) protein is Exodeoxyribonuclease 7 large subunit.